The sequence spans 162 residues: Crossover junction endodeoxyribonuclease RuvC (162 aa).

Residues Asp8, Glu69, and His141 contribute to the active site. Residues Asp8, Glu69, and His141 each contribute to the Mg(2+) site.

It belongs to the RuvC family. Homodimer which binds Holliday junction (HJ) DNA. The HJ becomes 2-fold symmetrical on binding to RuvC with unstacked arms; it has a different conformation from HJ DNA in complex with RuvA. In the full resolvosome a probable DNA-RuvA(4)-RuvB(12)-RuvC(2) complex forms which resolves the HJ. Requires Mg(2+) as cofactor.

It localises to the cytoplasm. It catalyses the reaction Endonucleolytic cleavage at a junction such as a reciprocal single-stranded crossover between two homologous DNA duplexes (Holliday junction).. Its function is as follows. The RuvA-RuvB-RuvC complex processes Holliday junction (HJ) DNA during genetic recombination and DNA repair. Endonuclease that resolves HJ intermediates. Cleaves cruciform DNA by making single-stranded nicks across the HJ at symmetrical positions within the homologous arms, yielding a 5'-phosphate and a 3'-hydroxyl group; requires a central core of homology in the junction. The consensus cleavage sequence is 5'-(A/T)TT(C/G)-3'. Cleavage occurs on the 3'-side of the TT dinucleotide at the point of strand exchange. HJ branch migration catalyzed by RuvA-RuvB allows RuvC to scan DNA until it finds its consensus sequence, where it cleaves and resolves the cruciform DNA. The chain is Crossover junction endodeoxyribonuclease RuvC from Wolbachia sp. subsp. Drosophila simulans (strain wRi).